A 437-amino-acid polypeptide reads, in one-letter code: O-methyltransferase 10 (437 aa).

Gly-259, Glu-282, Asn-315, and Met-316 together coordinate S-adenosyl-L-methionine. The active-site Proton acceptor is the His-335.

This sequence belongs to the class I-like SAM-binding methyltransferase superfamily. Cation-independent O-methyltransferase family. COMT subfamily.

It carries out the reaction (3,5-dichloro-2,4,6-trihydroxyphenyl)hexan-1-one + S-adenosyl-L-methionine = 1-(3,5-dichloro-2,6-dihydroxy-4-methoxyphenyl)hexan-1-one + S-adenosyl-L-homocysteine + H(+). This is O-methyltransferase 10 (omt10) from Dictyostelium discoideum (Social amoeba).